The chain runs to 130 residues: Small ribosomal subunit protein uS9 (130 aa).

Over residues 105-115 (TRDSRQVERKK) the composition is skewed to basic and acidic residues. Positions 105 to 130 (TRDSRQVERKKVGFRKSRKRTQFSKR) are disordered. The segment covering 116-130 (VGFRKSRKRTQFSKR) has biased composition (basic residues).

The protein belongs to the universal ribosomal protein uS9 family.

The protein is Small ribosomal subunit protein uS9 of Buchnera aphidicola subsp. Schizaphis graminum (strain Sg).